The primary structure comprises 280 residues: Mastin (280 aa).

A signal peptide spans Met-1–Ser-15. A propeptide spanning residues Val-16–Gly-30 is cleaved from the precursor. A Peptidase S1 domain is found at Ile-31–Pro-275. The cysteines at positions 62 and 78 are disulfide-linked. The Charge relay system role is filled by His-77. Residues Asn-106 and Asn-117 are each glycosylated (N-linked (GlcNAc...) asparagine). Asp-127 serves as the catalytic Charge relay system. 3 cysteine pairs are disulfide-bonded: Cys-161–Cys-234, Cys-194–Cys-215, and Cys-224–Cys-252. Ser-228 functions as the Charge relay system in the catalytic mechanism.

Belongs to the peptidase S1 family. In terms of assembly, oligomer; disulfide-linked. Post-translationally, N-glycosylated. Mononuclear cells within skin, intestine, trachea and lung parenchyma, and polymorphonuclear leukocytes within capillaries and blood.

It is found in the cytoplasm. Its activity is regulated as follows. Inhibited by leupeptin and bis(5-amidino-2-benzimidazolyl)methane (BABIM). Its function is as follows. Trypsin-like serine protease. Has a preference for extended substrates with basic residues at the P1 position; Arg is preferred over Lys. Active towards calcitonin gene-related peptide and gelatin. Not active towards substance P, vasoactive intestinal peptide, type I collagen or azocasein. The chain is Mastin from Canis lupus familiaris (Dog).